The following is a 275-amino-acid chain: Myoblast determination protein 1 homolog 2 (275 aa).

The 52-residue stretch at 84 to 135 folds into the bHLH domain; sequence DRRKAATMRERRRLGKVNDAFENLKRCTSNNPNQRLPKVEILRNAISYIESL. The span at 232-265 shows a compositional bias: polar residues; it reads SGQEGSEGSPCSPQEGSILSRNGGTVPSPTNCPQ. The segment at 232 to 275 is disordered; that stretch reads SGQEGSEGSPCSPQEGSILSRNGGTVPSPTNCPQPSHDPIYQVL.

Efficient DNA binding requires dimerization with another bHLH protein.

Its subcellular location is the nucleus. May act as a transcriptional activator that promotes transcription of muscle-specific target genes and plays a role in muscle differentiation. The sequence is that of Myoblast determination protein 1 homolog 2 (myod2) from Oncorhynchus mykiss (Rainbow trout).